The following is a 370-amino-acid chain: ADP-ribosylhydrolase ARH3 (370 aa).

Residues Glu35, Asp66, and Asp67 each coordinate Mg(2+). Asp66 contributes to the substrate binding site. Substrate is bound by residues 135-141 (RGSFGNG), His171, Leu225, and Ile261. Residues Asp304, Asp306, and Thr307 each coordinate Mg(2+).

The protein belongs to the ADP-ribosylglycohydrolase family. In terms of assembly, monomer. Mg(2+) is required as a cofactor.

It localises to the nucleus. The protein localises to the cytoplasm. The protein resides in the chromosome. Its subcellular location is the mitochondrion matrix. The enzyme catalyses [(1''-&gt;2')-ADP-alpha-D-ribose](n) + H2O = [(1''-&gt;2')-ADP-alpha-D-ribose](n-1) + ADP-D-ribose. It catalyses the reaction 1''-O-acetyl-ADP-alpha-D-ribose + H2O = ADP-D-ribose + acetate + H(+). It carries out the reaction O-(ADP-D-ribosyl)-L-seryl-[protein] + H2O = ADP-D-ribose + L-seryl-[protein]. The catalysed reaction is alpha-NAD(+) + H2O = ADP-D-ribose + nicotinamide + H(+). With respect to regulation, the protein undergoes a dramatic conformational switch from closed to open states upon substrate-binding, which enables specific substrate recognition for the 1''-O-linkage. The glutamate flap (Glu-35) blocks substrate entrance to Mg(2+) in the unliganded closed state. In presence of substrate, Glu-35 is ejected from the active site: this closed-to-open transition significantly widens the substrate-binding channel and precisely positions the scissile 1''-O-linkage for cleavage while securing tightly 2'- and 3'-hydroxyls of ADP-ribose. In terms of biological role, ADP-ribosylhydrolase that preferentially hydrolyzes the scissile alpha-O-linkage attached to the anomeric C1'' position of ADP-ribose and acts on different substrates, such as proteins ADP-ribosylated on serine and threonine, free poly(ADP-ribose) and O-acetyl-ADP-D-ribose. Specifically acts as a serine mono-ADP-ribosylhydrolase by mediating the removal of mono-ADP-ribose attached to serine residues on proteins, thereby playing a key role in DNA damage response. Serine ADP-ribosylation of proteins constitutes the primary form of ADP-ribosylation of proteins in response to DNA damage. Does not hydrolyze ADP-ribosyl-arginine, -cysteine, -diphthamide, or -asparagine bonds. Also able to degrade protein free poly(ADP-ribose), which is synthesized in response to DNA damage: free poly(ADP-ribose) acts as a potent cell death signal and its degradation by ADPRHL2 protects cells from poly(ADP-ribose)-dependent cell death, a process named parthanatos. Also hydrolyzes free poly(ADP-ribose) in mitochondria. Specifically digests O-acetyl-ADP-D-ribose, a product of deacetylation reactions catalyzed by sirtuins. Specifically degrades 1''-O-acetyl-ADP-D-ribose isomer, rather than 2''-O-acetyl-ADP-D-ribose or 3''-O-acetyl-ADP-D-ribose isomers. The sequence is that of ADP-ribosylhydrolase ARH3 (adprs) from Danio rerio (Zebrafish).